Here is a 392-residue protein sequence, read N- to C-terminus: Phospho-N-acetylmuramoyl-pentapeptide-transferase (392 aa).

10 helical membrane-spanning segments follow: residues 29–49 (AVLAALTALLIGLAAGSWVIG), 76–96 (TMGGVLILLSIALSTLLWFDL), 100–120 (FVWIVLLVTLGFGAIGWVDDW), 137–157 (YLWQSLIGLMAALYLVFCISE), 192–212 (AVSYPLGVLGFVLLTYLVIVG), 225–245 (GLAIMPVVMVGSALGVFAYVT), 262–282 (SGELLIFCAAMAGAGLAFLWF), 289–309 (VFMGDVGALALGAALGTIAII), 314–334 (IVLAVMGGIFVAEALSVMLQV), and 369–389 (QVVVRFWIITMLLCLVGLSTL).

This sequence belongs to the glycosyltransferase 4 family. MraY subfamily. Mg(2+) serves as cofactor.

The protein resides in the cell inner membrane. It carries out the reaction UDP-N-acetyl-alpha-D-muramoyl-L-alanyl-gamma-D-glutamyl-meso-2,6-diaminopimeloyl-D-alanyl-D-alanine + di-trans,octa-cis-undecaprenyl phosphate = di-trans,octa-cis-undecaprenyl diphospho-N-acetyl-alpha-D-muramoyl-L-alanyl-D-glutamyl-meso-2,6-diaminopimeloyl-D-alanyl-D-alanine + UMP. It participates in cell wall biogenesis; peptidoglycan biosynthesis. Functionally, catalyzes the initial step of the lipid cycle reactions in the biosynthesis of the cell wall peptidoglycan: transfers peptidoglycan precursor phospho-MurNAc-pentapeptide from UDP-MurNAc-pentapeptide onto the lipid carrier undecaprenyl phosphate, yielding undecaprenyl-pyrophosphoryl-MurNAc-pentapeptide, known as lipid I. This Verminephrobacter eiseniae (strain EF01-2) protein is Phospho-N-acetylmuramoyl-pentapeptide-transferase.